Here is a 300-residue protein sequence, read N- to C-terminus: MALDEAPAEARPGSRAVELEIDGRSRIFDIDDPDLPKWIDEEAFRSDDYPYKKKLDREEYEETLTKLQIELVKVQFWMQATGKRVMAVFEGRDAAGKGGAIHATTANMNPRSARVVALTKPTETERGQWYFQRYVATFPTAGEFVLFDRSWYNRAGVEPVMGFCTPDQYEQFLKEAPRFEEMIANEGIHLFKFWINIGREMQLKRFHDRRHDPLKIWKLSPMDIAALSKWDDYTGKRDRMLKETHTEHGPWAVIRGNDKRRSRINVIRHMLTKLDYDGKDEAAIGEVDEKILGSGPGFLR.

It belongs to the polyphosphate kinase 2 (PPK2) family. Class I subfamily. In terms of assembly, homotetramer. Requires Mg(2+) as cofactor.

The enzyme catalyses [phosphate](n) + ATP = [phosphate](n+1) + ADP. It carries out the reaction [phosphate](n) + GTP = [phosphate](n+1) + GDP. Its function is as follows. Uses inorganic polyphosphate (polyP) as a donor to convert ADP to ATP. Can also convert GDP to GTP, with lower efficiency. Cannot dephosphorylate ATP in the presence of polyP. This chain is ADP-polyphosphate phosphotransferase 1, found in Rhizobium meliloti (strain 1021) (Ensifer meliloti).